The following is a 513-amino-acid chain: Light-independent protochlorophyllide reductase subunit B (513 aa).

Residue D36 participates in [4Fe-4S] cluster binding. The active-site Proton donor is D299. 434 to 435 (GM) provides a ligand contact to substrate.

It belongs to the ChlB/BchB/BchZ family. Protochlorophyllide reductase is composed of three subunits; ChlL, ChlN and ChlB. Forms a heterotetramer of two ChlB and two ChlN subunits. [4Fe-4S] cluster is required as a cofactor.

Its subcellular location is the plastid. The protein localises to the chloroplast. The enzyme catalyses chlorophyllide a + oxidized 2[4Fe-4S]-[ferredoxin] + 2 ADP + 2 phosphate = protochlorophyllide a + reduced 2[4Fe-4S]-[ferredoxin] + 2 ATP + 2 H2O. Its pathway is porphyrin-containing compound metabolism; chlorophyll biosynthesis (light-independent). Component of the dark-operative protochlorophyllide reductase (DPOR) that uses Mg-ATP and reduced ferredoxin to reduce ring D of protochlorophyllide (Pchlide) to form chlorophyllide a (Chlide). This reaction is light-independent. The NB-protein (ChlN-ChlB) is the catalytic component of the complex. This is Light-independent protochlorophyllide reductase subunit B from Staurastrum punctulatum (Green alga).